We begin with the raw amino-acid sequence, 465 residues long: Fumarate hydratase class II (465 aa).

Substrate is bound by residues 99 to 101 (SGT), 130 to 133 (HPND), 140 to 142 (STN), and threonine 188. Histidine 189 serves as the catalytic Proton donor/acceptor. Residue serine 319 is part of the active site. Residues serine 320 and 325–327 (KVN) contribute to the substrate site.

This sequence belongs to the class-II fumarase/aspartase family. Fumarase subfamily. As to quaternary structure, homotetramer.

Its subcellular location is the cytoplasm. It catalyses the reaction (S)-malate = fumarate + H2O. The protein operates within carbohydrate metabolism; tricarboxylic acid cycle; (S)-malate from fumarate: step 1/1. Involved in the TCA cycle. Catalyzes the stereospecific interconversion of fumarate to L-malate. This is Fumarate hydratase class II from Prochlorococcus marinus (strain SARG / CCMP1375 / SS120).